A 208-amino-acid polypeptide reads, in one-letter code: ATP-dependent Clp protease proteolytic subunit (208 aa).

Ser105 serves as the catalytic Nucleophile. His130 is a catalytic residue.

The protein belongs to the peptidase S14 family. As to quaternary structure, fourteen ClpP subunits assemble into 2 heptameric rings which stack back to back to give a disk-like structure with a central cavity, resembling the structure of eukaryotic proteasomes.

It is found in the cytoplasm. The enzyme catalyses Hydrolysis of proteins to small peptides in the presence of ATP and magnesium. alpha-casein is the usual test substrate. In the absence of ATP, only oligopeptides shorter than five residues are hydrolyzed (such as succinyl-Leu-Tyr-|-NHMec, and Leu-Tyr-Leu-|-Tyr-Trp, in which cleavage of the -Tyr-|-Leu- and -Tyr-|-Trp bonds also occurs).. Cleaves peptides in various proteins in a process that requires ATP hydrolysis. Has a chymotrypsin-like activity. Plays a major role in the degradation of misfolded proteins. The chain is ATP-dependent Clp protease proteolytic subunit from Xylella fastidiosa (strain M23).